The chain runs to 134 residues: Prolactin (134 aa).

Cys126 and Cys134 are oxidised to a cystine.

This sequence belongs to the somatotropin/prolactin family.

The protein localises to the secreted. The sequence is that of Prolactin from Bufo japonicus (Japanese common toad).